A 420-amino-acid chain; its full sequence is MDGTDVTMLMREIGVRARAAAAELAFAEPSRKEEALNAAAEAMLARSDEILEANGRDLAFGAEKGLTPAMMDRLKLDAARIDGIVEGLRAVAGQPDPVGQVIAEWDRPSGLHIRRVRTPLGVVGVIYESRPNVTADAGALCLKSGNAVILRGGSESFHSSGAIHAALQDGLRQAGLPVDAIQRVPTRDRAAVAEMLRMVEHIDVIVPRGGKGLVGLVQAEARVPVFAHLEGICHVYADGEADLEKARRVVLNAKTRRTGICGSAECLLIDRAFLAKHGPVLIEDLLKAGVEVRAEGELAQVPGTVPAQPEDFGREFLDMIIAAKVVDGVDEAIAHIRRYGSSHTESILTENDATAERFFRRLDSAILMRNASTQFADGGEFGMGAEIGIATGKMHARGPVGAEQLTSFKYLVTGDGTIRT.

Belongs to the gamma-glutamyl phosphate reductase family.

It localises to the cytoplasm. The enzyme catalyses L-glutamate 5-semialdehyde + phosphate + NADP(+) = L-glutamyl 5-phosphate + NADPH + H(+). Its pathway is amino-acid biosynthesis; L-proline biosynthesis; L-glutamate 5-semialdehyde from L-glutamate: step 2/2. Catalyzes the NADPH-dependent reduction of L-glutamate 5-phosphate into L-glutamate 5-semialdehyde and phosphate. The product spontaneously undergoes cyclization to form 1-pyrroline-5-carboxylate. This Cereibacter sphaeroides (strain ATCC 17023 / DSM 158 / JCM 6121 / CCUG 31486 / LMG 2827 / NBRC 12203 / NCIMB 8253 / ATH 2.4.1.) (Rhodobacter sphaeroides) protein is Gamma-glutamyl phosphate reductase.